The chain runs to 233 residues: Homeobox protein EMX1 (233 aa).

A DNA-binding region (homeobox) is located at residues 135 to 194 (PKRIRTAFSPSQLLRLERAFEKNHYVVGAERKQLASSLSLSETQVKVWFQNRRTKYKRQK). Residues 192 to 233 (RQKLEEEGPDSDQKKKGSHHINRWRLATKQPNGEDIDVTSND) form a disordered region. A compositionally biased stretch (basic and acidic residues) spans 193-206 (QKLEEEGPDSDQKK).

This sequence belongs to the EMX homeobox family.

Its subcellular location is the nucleus. Its function is as follows. May function in combinations with OTX1/2 to specify cell fates in the developing central nervous system. This Xenopus tropicalis (Western clawed frog) protein is Homeobox protein EMX1 (emx1).